The chain runs to 248 residues: MAPGAPSSSPSPILAALLFSSLVLSPVQAIVVYTDKEVHGAVGSQVTLYCSFWSSEWVSDDLSFTWRYQPEGGRDAISIFHYAKGQPYIDEVGTFKERIQWVGDPHRKDGSIVIHNLDYGDNGTFTCDVKNPPDIVGKTSQVTLYVFEKVPTRYGVVLGAVIGGVLGVVLLALLLFYLIRYCWLRRQAALQRRLSAMEKGKLHKTAKDASKRGRQTPVLYAMLDHSRSTKAASEKKTKGLGESRKDKK.

The N-terminal stretch at 1–28 is a signal peptide; sequence MAPGAPSSSPSPILAALLFSSLVLSPVQ. The Extracellular segment spans residues 29–155; it reads AIVVYTDKEV…VFEKVPTRYG (127 aa). The Ig-like V-type domain maps to 30 to 143; it reads IVVYTDKEVH…DIVGKTSQVT (114 aa). A disulfide bridge links Cys-50 with Cys-127. An N-linked (GlcNAc...) (complex) asparagine glycan is attached at Asn-122. The chain crosses the membrane as a helical span at residues 156 to 176; it reads VVLGAVIGGVLGVVLLALLLF. Residues 177–248 lie on the Cytoplasmic side of the membrane; that stretch reads YLIRYCWLRR…GLGESRKDKK (72 aa). Ser-210 carries the post-translational modification Phosphoserine; by PKC. The interval 224-248 is disordered; that stretch reads DHSRSTKAASEKKTKGLGESRKDKK. Ser-226 and Ser-228 each carry phosphoserine. Ser-233 and Ser-243 each carry phosphoserine; by PKC.

Belongs to the myelin P0 protein family. As to quaternary structure, homodimer and homotetramer. N-glycosylated; contains sulfate-substituted glycan. In terms of tissue distribution, found only in peripheral nervous system Schwann cells.

The protein resides in the cell membrane. Functionally, is an adhesion molecule necessary for normal myelination in the peripheral nervous system. It mediates adhesion between adjacent myelin wraps and ultimately drives myelin compaction. The protein is Myelin protein P0 (MPZ) of Bos taurus (Bovine).